A 135-amino-acid chain; its full sequence is Fluoride-specific ion channel FluC (135 aa).

4 helical membrane-spanning segments follow: residues 12–32 (FLVI…LGLS), 42–62 (LGTL…VGIF), 70–90 (LAWK…FSTF), and 106–126 (AIGL…LGLL). Positions 82 and 85 each coordinate Na(+).

Belongs to the fluoride channel Fluc/FEX (TC 1.A.43) family.

Its subcellular location is the cell inner membrane. It carries out the reaction fluoride(in) = fluoride(out). With respect to regulation, na(+) is not transported, but it plays an essential structural role and its presence is essential for fluoride channel function. In terms of biological role, fluoride-specific ion channel. Important for reducing fluoride concentration in the cell, thus reducing its toxicity. This Dechloromonas aromatica (strain RCB) protein is Fluoride-specific ion channel FluC.